The following is a 426-amino-acid chain: Enolase (426 aa).

Gly41 serves as a coordination point for phosphoenolpyruvate. Ser43 is a binding site for Mg(2+). Glu165 is a phosphoenolpyruvate binding site. (2R)-2-phosphoglycerate-binding residues include Glu165 and Glu206. Glu206 serves as the catalytic Proton donor. Asp243, Glu286, and Asp313 together coordinate Mg(2+). Positions 313, 338, 367, 368, and 389 each coordinate phosphoenolpyruvate. Residues Lys338, Arg367, and Ser368 each coordinate (2R)-2-phosphoglycerate. Lys338 serves as the catalytic Proton acceptor.

Belongs to the enolase family. As to quaternary structure, homodimer. Requires Mg(2+) as cofactor.

It localises to the cytoplasm. The protein localises to the secreted. Its subcellular location is the cell surface. The catalysed reaction is (2R)-2-phosphoglycerate = phosphoenolpyruvate + H2O. The protein operates within carbohydrate degradation; glycolysis; pyruvate from D-glyceraldehyde 3-phosphate: step 4/5. Its function is as follows. Catalyzes the reversible conversion of 2-phosphoglycerate (2-PG) into phosphoenolpyruvate (PEP). It is essential for the degradation of carbohydrates via glycolysis. This is Enolase from Chloroflexus aurantiacus (strain ATCC 29366 / DSM 635 / J-10-fl).